The sequence spans 579 residues: V-type ATP synthase alpha chain (579 aa).

227–234 (GGFGTGKT) serves as a coordination point for ATP.

The protein belongs to the ATPase alpha/beta chains family.

It catalyses the reaction ATP + H2O + 4 H(+)(in) = ADP + phosphate + 5 H(+)(out). Functionally, produces ATP from ADP in the presence of a proton gradient across the membrane. The V-type alpha chain is a catalytic subunit. The chain is V-type ATP synthase alpha chain from Anaeromyxobacter sp. (strain K).